A 352-amino-acid chain; its full sequence is PDZ and LIM domain protein 2 (352 aa).

Positions 1–84 (MALTVDVAGP…PLRLQLDRSQ (84 aa)) constitute a PDZ domain. 2 disordered regions span residues 67–97 (SKIRQSPSPLRLQLDRSQATSPGQTNGDSSL) and 111–149 (YTESQSSLRSSYSSPTSLSPRAGSPFSPPPSSSSLTGEA). A compositionally biased stretch (polar residues) spans 81 to 95 (DRSQATSPGQTNGDS). Positions 111-135 (YTESQSSLRSSYSSPTSLSPRAGSP) are enriched in low complexity. Serine 124 is modified (phosphoserine). Threonine 126 carries the phosphothreonine modification. Residues serine 127, serine 129, serine 134, serine 137, serine 143, serine 161, serine 197, serine 203, serine 213, and serine 266 each carry the phosphoserine modification. A disordered region spans residues 170–213 (LSYSGRPGSRQAGLGRAGDSAVLVLPPSPGPRSSRPSMDSEGGS). In terms of domain architecture, LIM zinc-binding spans 284 to 344 (HTCEKCSTSI…EKHARQRYSA (61 aa)).

In terms of assembly, interacts with alpha-actinins ACTN1 and ACTN4, FLNA and MYH9. Interacts (via LIM zinc-binding domain) with MKRN2.

It localises to the cytoplasm. The protein resides in the nucleus. Its subcellular location is the cytoskeleton. In terms of biological role, probable adapter protein located at the actin cytoskeleton that promotes cell attachment. Necessary for the migratory capacity of epithelial cells. Overexpression enhances cell adhesion to collagen and fibronectin and suppresses anchorage independent growth. May contribute to tumor cell migratory capacity. In Homo sapiens (Human), this protein is PDZ and LIM domain protein 2 (PDLIM2).